Consider the following 85-residue polypeptide: U4-theraphotoxin-Hhn1j (85 aa).

A signal peptide spans 1 to 22 (MKVTLIAILTCAAVLVLHTTAA). Residues 23-48 (EELEAESQLMEVGMPDTELAAVDEER) constitute a propeptide that is removed on maturation. 3 cysteine pairs are disulfide-bonded: Cys52-Cys66, Cys56-Cys77, and Cys71-Cys82.

It belongs to the neurotoxin 12 (Hwtx-2) family. 02 (Hwtx-2) subfamily. As to expression, expressed by the venom gland.

The protein resides in the secreted. In terms of biological role, postsynaptic neurotoxin. In Cyriopagopus hainanus (Chinese bird spider), this protein is U4-theraphotoxin-Hhn1j.